The primary structure comprises 491 residues: Probable glycine dehydrogenase (decarboxylating) subunit 2 (491 aa).

Lys273 bears the N6-(pyridoxal phosphate)lysine mark.

Belongs to the GcvP family. C-terminal subunit subfamily. As to quaternary structure, the glycine cleavage system is composed of four proteins: P, T, L and H. In this organism, the P 'protein' is a heterodimer of two subunits. Requires pyridoxal 5'-phosphate as cofactor.

The enzyme catalyses N(6)-[(R)-lipoyl]-L-lysyl-[glycine-cleavage complex H protein] + glycine + H(+) = N(6)-[(R)-S(8)-aminomethyldihydrolipoyl]-L-lysyl-[glycine-cleavage complex H protein] + CO2. Its function is as follows. The glycine cleavage system catalyzes the degradation of glycine. The P protein binds the alpha-amino group of glycine through its pyridoxal phosphate cofactor; CO(2) is released and the remaining methylamine moiety is then transferred to the lipoamide cofactor of the H protein. The chain is Probable glycine dehydrogenase (decarboxylating) subunit 2 from Bacillus cereus (strain G9842).